The primary structure comprises 1071 residues: Methionine S-methyltransferase (1071 aa).

Position 2 is an N-acetylalanine (Ala-2).

Belongs to the class I-like SAM-binding methyltransferase superfamily. As to quaternary structure, homotetramer. As to expression, expressed in roots, rosette leaves and cauline leaves. Expressed at a lower level in developing seeds.

The protein resides in the cytoplasm. The enzyme catalyses L-methionine + S-adenosyl-L-methionine = S-methyl-L-methionine + S-adenosyl-L-homocysteine. Its function is as follows. Catalyzes the S-methylmethionine (SMM) biosynthesis from adenosyl-L-homocysteine (AdoMet) and methionine. SMM biosynthesis (by MMT1) and degradation (by HMT-1, HMT-2 and HMT-3) constitute the SMM cycle in plants, which is probably required to achieve short term control of AdoMet level. Also able to catalyze the selenium-methylmethionine (SeMM) from AdoMet and selenium-methionine (SeMet). May play a role in phoem sulfur transport; such function is however not essential. The protein is Methionine S-methyltransferase (MMT1) of Arabidopsis thaliana (Mouse-ear cress).